The primary structure comprises 168 residues: GTP-dependent dephospho-CoA kinase (168 aa).

Residues Asp-49, Ile-50, Val-51, Asp-68, Lys-70, and Glu-120 each coordinate GTP.

It belongs to the GTP-dependent DPCK family.

The catalysed reaction is 3'-dephospho-CoA + GTP = GDP + CoA + H(+). The protein operates within cofactor biosynthesis; coenzyme A biosynthesis. Catalyzes the GTP-dependent phosphorylation of the 3'-hydroxyl group of dephosphocoenzyme A to form coenzyme A (CoA). The polypeptide is GTP-dependent dephospho-CoA kinase (Pyrobaculum islandicum (strain DSM 4184 / JCM 9189 / GEO3)).